A 253-amino-acid chain; its full sequence is Triosephosphate isomerase (253 aa).

9–11 is a binding site for substrate; it reads NWK. Catalysis depends on histidine 95, which acts as the Electrophile. Glutamate 167 functions as the Proton acceptor in the catalytic mechanism. Substrate-binding positions include glycine 173, serine 213, and 234–235; that span reads GG. Serine 213 carries the post-translational modification Phosphoserine.

The protein belongs to the triosephosphate isomerase family. As to quaternary structure, homodimer.

The protein localises to the cytoplasm. It catalyses the reaction D-glyceraldehyde 3-phosphate = dihydroxyacetone phosphate. It participates in carbohydrate biosynthesis; gluconeogenesis. The protein operates within carbohydrate degradation; glycolysis; D-glyceraldehyde 3-phosphate from glycerone phosphate: step 1/1. Functionally, involved in the gluconeogenesis. Catalyzes stereospecifically the conversion of dihydroxyacetone phosphate (DHAP) to D-glyceraldehyde-3-phosphate (G3P). The sequence is that of Triosephosphate isomerase from Bacillus pumilus (strain SAFR-032).